We begin with the raw amino-acid sequence, 1842 residues long: Fatty acid synthase alpha subunit pigJ (1842 aa).

The disordered stretch occupies residues 120-184; that stretch reads GAPVEEEGSK…TPAGGSTTPD (65 aa). Residues 140–175 are compositionally biased toward low complexity; sequence SGSSRTATTAKATVTTPSSSSPETAPPAASTPSQGT. The region spanning 184–262 is the Carrier domain; that stretch reads DIPLSAKHVV…DALQGNFPGK (79 aa). Ser-222 is modified (O-(pantetheine 4'-phosphoryl)serine). The interval 611 to 807 is beta-ketoacyl reductase; that stretch reads GKTVLVTGAG…CGAAIGWVRG (197 aa). In terms of domain architecture, Ketosynthase family 3 (KS3) spans 1058 to 1585; that stretch reads KEFLQEIVVE…QKGGIAVVVA (528 aa). Active-site for beta-ketoacyl synthase activity residues include Cys-1244, His-1470, and His-1511. Positions 1649–1672 are disordered; the sequence is KARVGGHPENNNNNNNNSSSKRNT. Residues 1658-1668 show a composition bias toward low complexity; the sequence is NNNNNNNNSSS. 3 residues coordinate Mg(2+): Asp-1725, Val-1726, and Glu-1727. Acetyl-CoA contacts are provided by residues 1725–1727, Ser-1761, 1770–1780, and 1823–1825; these read DVE, EAVFKSLQTPS, and ITH. The Mg(2+) site is built by Thr-1824 and His-1825.

Belongs to the thiolase-like superfamily. Fungal fatty acid synthetase subunit alpha family. [Alpha(6)beta(6)] hexamers of two multifunctional subunits (alpha and beta).

It carries out the reaction acetyl-CoA + n malonyl-CoA + 2n NADPH + 4n H(+) = a long-chain-acyl-CoA + n CoA + n CO2 + 2n NADP(+).. The catalysed reaction is a fatty acyl-[ACP] + malonyl-[ACP] + H(+) = a 3-oxoacyl-[ACP] + holo-[ACP] + CO2. The enzyme catalyses a (3R)-hydroxyacyl-[ACP] + NADP(+) = a 3-oxoacyl-[ACP] + NADPH + H(+). The protein operates within secondary metabolite biosynthesis. Functionally, fatty acid synthase alpha subunit; part of the gene cluster that mediates the biosynthesis of azaphilone pigments (MonAzPs), a complex mixture of compounds with a common azaphilone skeleton very widely used as food colorants. PigJ and pigK form the two subunits of a dedicated fungal fatty acid synthase (FAS) that produces the side chain fatty acyl moiety of MonAzPs, a beta-keto fatty acid. The chain length control of the pigJ-pigK FAS is somewhat flexible as MonAzPs features either a beta-ketooctanoic or a beta-ketodecanoic acid moiety. The beta-ketoacyl-ACP probably serves as the substrate for the acetyltransferase pigD that directly transfers the fatty acyl chain to the C-4 alcohol of the pyran ring. The first step of the pathway is performed by the nrPKS pigA that forms the hexaketide precursor from successive condensations of five malonyl-CoA units, with a simple acetyl-CoA starter unit. The role of esterase pigG is not clear, but it may play at most a supplementary role in the formation of the benzaldehyde produced by the pigA nrPKS. This very reactive benzaldehyde is intercepted by the pigC ketoreductase that to provide the first stable enzyme-free MonAzPs intermediate, 6-(4-hydroxy-2-oxopentyl)-3-methyl-2,4-dioxocyclohexane carbaldehyde, also known as M7PKS-1. The FAD-dependent monooxygenase pigN hydroxylates M7PKS-1 at C-4, which triggers the formation of the pyran ring. PigJ, pigK and pigD are involved in the acetylation of the pyran ring. PigJ and pigK form the two subunits of a dedicated fungal FAS that produces the side chain fatty acyl moiety of MonAzPs and pigD transfers the fatty acyl chain to the C-4 alcohol. PigM and pigO are involved in the elimination of the omega-1 alcohol. PigM acts as an O-acetyltransferase that synthesizes the putative O-11 acetyl intermediate whereas pigO eliminates acetic acid to yield an intermediate with a C10(11) double bond. The dehydration of the C-11 alcohol followed by the reduction of the C6(7) double bond by the NAD(P)H-dependent oxidoreductase pigE increases the electrophilicity of the C-5 ketone of the resulting acyl benzopyran. This in turn sets up the C-5 ketone for an intramolecular Knoevenagel aldol condensation with the C-20 enol of the side chain. This condensation affords the characteristic linear tricyclic carbon skeletons of the yellow pigments that serve as the common precursors for the classical yellow pigments monascin and ankaflavin, orange pigments rubopunctatin and monascorubrin, and red pigments ribropunctamine and monascorubramine. The FAD-dependent oxidoreductase pigF is especially invoved in the biosynthesis of orange and red pigments via desaturation of C6(7). This Monascus ruber (Mold) protein is Fatty acid synthase alpha subunit pigJ.